Reading from the N-terminus, the 447-residue chain is Cysteine--tRNA ligase (447 aa).

A Zn(2+)-binding site is contributed by C28. Positions 30 to 40 (PTVYNYIHIGN) match the 'HIGH' region motif. Residues C211, H236, and E240 each coordinate Zn(2+). The 'KMSKS' region signature appears at 268-272 (KMSKS). K271 is an ATP binding site.

It belongs to the class-I aminoacyl-tRNA synthetase family. In terms of assembly, monomer. It depends on Zn(2+) as a cofactor.

It is found in the cytoplasm. The catalysed reaction is tRNA(Cys) + L-cysteine + ATP = L-cysteinyl-tRNA(Cys) + AMP + diphosphate. The chain is Cysteine--tRNA ligase from Streptococcus agalactiae serotype Ia (strain ATCC 27591 / A909 / CDC SS700).